The sequence spans 464 residues: MTGFLRVFLVLSATLSGSWVTLTATAGLSSVAEHEDALLRHLFQGYQKWVRPVLNSSDIIKVYFGLKISQLVDVDEKNQLMTTNVWLKQEWTDQKLRWNPEEYGGINSIKVPSESLWLPDIVLFENADGRFEGSLMTKAIVKSSGTVSWTPPASYKSSCTMDVTFFPFDRQNCSMKFGSWTYDGTMVDLILINENVDRKDFFDNGEWEILNAKGMKGNRREGFYSYPFVTYSFVLRRLPLFYTLFLIIPCLGLSFLTVLVFYLPSDEGEKLSLSTSVLVSLTVFLLVIEEIIPSSSKVIPLIGEYLLFIMIFVTLSIIVTVFVINVHHRSSSTYHPMAPWVKRLFLQRLPRWLCMKDPMDRFSFPDGKESDTAVRGKVSGKRKQTPASDGERVLVAFLEKASESIRYISRHVKKEHFISQVVQDWKFVAQVLDRIFLWLFLIASVLGSILIFIPALKMWIHRFH.

An N-terminal signal peptide occupies residues 1–30 (MTGFLRVFLVLSATLSGSWVTLTATAGLSS). Residues 31–238 (VAEHEDALLR…VTYSFVLRRL (208 aa)) are Extracellular-facing. N-linked (GlcNAc...) asparagine glycosylation is found at N55 and N172. C159 and C173 are disulfide-bonded. The next 3 membrane-spanning stretches (helical) occupy residues 239–263 (PLFYTLFLIIPCLGLSFLTVLVFYL), 271–288 (LSLSTSVLVSLTVFLLVI), and 305–326 (YLLFIMIFVTLSIIVTVFVINV). The Cytoplasmic segment spans residues 327–434 (HHRSSSTYHP…WKFVAQVLDR (108 aa)). A helical transmembrane segment spans residues 435–453 (IFLWLFLIASVLGSILIFI).

This sequence belongs to the ligand-gated ion channel (TC 1.A.9) family. Acetylcholine receptor (TC 1.A.9.1) subfamily. Beta-3/CHRNB3 sub-subfamily. As to quaternary structure, neuronal AChR seems to be composed of two different type of subunits: alpha and beta. CHRNB3/beta-3 subunit is only able to form functional nAChRs when co-assembled with another beta subunit. Participates in pentameric assemblies along with CHRNA4/alpha-4 and CHRNB2/beta-2 subunits and with CHRNA6/alpha-6 as well, forming stoichiometries such as (CHRNA3:CHRNB4)2:CHRNB3, (CHRNA4:CHRNB2)2:CHRNB3 or (CHRNA6:CHRNB2)2:CHRNB3.

It localises to the synaptic cell membrane. Its subcellular location is the cell membrane. The catalysed reaction is Ca(2+)(in) = Ca(2+)(out). It catalyses the reaction K(+)(in) = K(+)(out). The enzyme catalyses Na(+)(in) = Na(+)(out). Its activity is regulated as follows. Activated by a myriad of ligands such as acetylcholine, cytisine, nicotine, choline and epibatidine. Component of neuronal acetylcholine receptors (nAChRs) that function as pentameric, ligand-gated cation channels with high calcium permeability among other activities. nAChRs are excitatory neurotrasnmitter receptors formed by a collection of nAChR subunits known to mediate synaptic transmission in the nervous system and the neuromuscular junction. Each nAchR subunit confers differential attributes to channel properties, including activation, deactivation and desensitization kinetics, pH sensitivity, cation permeability, and binding to allosteric modulators. Has an accessory rather than functional role and is only able to form functional nAChRs when co-assembled with another beta subunit. Participates in pentameric assemblies along with CHRNA3, CHRNA4, CHRNA6, CHRNB2 and CHRNB4. Modulates receptor assembly and increases receptor sensitivity to nicotine when associated with CHRNB2, CHRNA4 and/or CHRNA6 as well as CHRNA3 and CHRNB4. Seems to play a role in nicotine addiction. This chain is Neuronal acetylcholine receptor subunit beta-3 (Chrnb3), found in Rattus norvegicus (Rat).